The primary structure comprises 196 residues: CASP-like protein 2A2 (196 aa).

The Cytoplasmic portion of the chain corresponds to 1-26 (MAQGKESVSVVEMEGSGNGPAVEMRH). The helical transmembrane segment at 27-47 (FETLFRLLPVGLCISALVLML) threads the bilayer. Over 48 to 68 (KSEQSDQYMQLDYSNVDAFRC) the chain is Extracellular. Residues 69-89 (LAYANGICAGYSLISAFDSMV) traverse the membrane as a helical segment. The Cytoplasmic portion of the chain corresponds to 90 to 98 (PVSHHISRS). The chain crosses the membrane as a helical span at residues 99 to 119 (WILFLLDQGITYLMLAGGAVA). The Extracellular segment spans residues 120-148 (TQVLYVAYKGDEKATWEQICGSYGRFCNR). A helical transmembrane segment spans residues 149-169 (AGASVIISFFALVCFLLLSLL). Over 170 to 196 (SAYRLFSKYDPPIHGGAKLEDQTTAQI) the chain is Cytoplasmic.

Belongs to the Casparian strip membrane proteins (CASP) family. In terms of assembly, homodimer and heterodimers.

Its subcellular location is the cell membrane. This chain is CASP-like protein 2A2, found in Picea sitchensis (Sitka spruce).